Here is a 356-residue protein sequence, read N- to C-terminus: Histidinol-phosphate aminotransferase (356 aa).

Lysine 210 carries the post-translational modification N6-(pyridoxal phosphate)lysine.

The protein belongs to the class-II pyridoxal-phosphate-dependent aminotransferase family. Histidinol-phosphate aminotransferase subfamily. In terms of assembly, homodimer. Pyridoxal 5'-phosphate serves as cofactor.

It catalyses the reaction L-histidinol phosphate + 2-oxoglutarate = 3-(imidazol-4-yl)-2-oxopropyl phosphate + L-glutamate. It functions in the pathway amino-acid biosynthesis; L-histidine biosynthesis; L-histidine from 5-phospho-alpha-D-ribose 1-diphosphate: step 7/9. The polypeptide is Histidinol-phosphate aminotransferase (Gluconacetobacter diazotrophicus (strain ATCC 49037 / DSM 5601 / CCUG 37298 / CIP 103539 / LMG 7603 / PAl5)).